The following is a 452-amino-acid chain: Prephenate dehydrogenase [NADP(+)] (452 aa).

Residue 14–43 (KVIGIIGLGDMGLLYANKFTDAGWGVICCD) coordinates NADP(+). In terms of domain architecture, Prephenate/arogenate dehydrogenase spans 14–297 (KVIGIIGLGD…GKHTGLLLLD (284 aa)).

It belongs to the prephenate/arogenate dehydrogenase family.

It carries out the reaction prephenate + NADP(+) = 3-(4-hydroxyphenyl)pyruvate + CO2 + NADPH. Its pathway is amino-acid biosynthesis; L-tyrosine biosynthesis; (4-hydroxyphenyl)pyruvate from prephenate (NADP(+) route): step 1/1. The chain is Prephenate dehydrogenase [NADP(+)] (TYR1) from Saccharomyces cerevisiae (strain ATCC 204508 / S288c) (Baker's yeast).